A 739-amino-acid polypeptide reads, in one-letter code: Phosphoribosylformylglycinamidine synthase subunit PurL (739 aa).

Residue histidine 54 is part of the active site. ATP-binding residues include tyrosine 57 and lysine 96. Position 98 (glutamate 98) interacts with Mg(2+). Substrate is bound by residues 99-102 (SHNH) and arginine 121. The active-site Proton acceptor is the histidine 100. Aspartate 122 lines the Mg(2+) pocket. Glutamine 245 contacts substrate. Aspartate 275 lines the Mg(2+) pocket. 319–321 (ESQ) contacts substrate. Positions 504 and 541 each coordinate ATP. A Mg(2+)-binding site is contributed by asparagine 542. Serine 544 lines the substrate pocket.

The protein belongs to the FGAMS family. In terms of assembly, monomer. Part of the FGAM synthase complex composed of 1 PurL, 1 PurQ and 2 PurS subunits.

The protein resides in the cytoplasm. The catalysed reaction is N(2)-formyl-N(1)-(5-phospho-beta-D-ribosyl)glycinamide + L-glutamine + ATP + H2O = 2-formamido-N(1)-(5-O-phospho-beta-D-ribosyl)acetamidine + L-glutamate + ADP + phosphate + H(+). It functions in the pathway purine metabolism; IMP biosynthesis via de novo pathway; 5-amino-1-(5-phospho-D-ribosyl)imidazole from N(2)-formyl-N(1)-(5-phospho-D-ribosyl)glycinamide: step 1/2. Functionally, part of the phosphoribosylformylglycinamidine synthase complex involved in the purines biosynthetic pathway. Catalyzes the ATP-dependent conversion of formylglycinamide ribonucleotide (FGAR) and glutamine to yield formylglycinamidine ribonucleotide (FGAM) and glutamate. The FGAM synthase complex is composed of three subunits. PurQ produces an ammonia molecule by converting glutamine to glutamate. PurL transfers the ammonia molecule to FGAR to form FGAM in an ATP-dependent manner. PurS interacts with PurQ and PurL and is thought to assist in the transfer of the ammonia molecule from PurQ to PurL. This Lactococcus lactis subsp. lactis (strain IL1403) (Streptococcus lactis) protein is Phosphoribosylformylglycinamidine synthase subunit PurL.